The sequence spans 462 residues: PTS system mannitol-specific cryptic EIICB component (462 aa).

The Cytoplasmic portion of the chain corresponds to 1–24 (MENKSARAKVQAFGGFLTAMVIPN). Positions 13–344 (FGGFLTAMVI…LKMEKTVETE (332 aa)) constitute a PTS EIIC type-2 domain. A helical transmembrane segment spans residues 25–46 (IGAFIAWGFITALFIPTGWLPN). Over 47-50 (EHFA) the chain is Periplasmic. The chain crosses the membrane as a helical span at residues 51–71 (KIVGPMITYLLPVMIGSTGGH). Residues 72 to 134 (LVGGKRGAVM…AGFEMVINNF (63 aa)) lie on the Cytoplasmic side of the membrane. The helical transmembrane segment at 135–156 (SLGIAGMLLCLLGFEVIGPAVL) threads the bilayer. At 157–165 (IANTFVKEC) the chain is on the periplasmic side. Residues 166-186 (IEALVHAGYLPLLSVINEPAK) traverse the membrane as a helical segment. Topologically, residues 187 to 273 (VLFLNNAIDQ…VLMKPLTIIA (87 aa)) are cytoplasmic. The chain crosses the membrane as a helical span at residues 274 to 293 (MIAGGMSGTWMFNLLDGGLV). Over 294-313 (AGPSPGSIFAYLALTPKGSF) the chain is Periplasmic. The helical transmembrane segment at 314 to 335 (LATIAGVTVGTLVSFAITSLIL) threads the bilayer. At 336-462 (KMEKTVETES…FNQLTAEHKH (127 aa)) the chain is on the cytoplasmic side. One can recognise a PTS EIIB type-2 domain in the interval 371 to 461 (KRIAFVCDAG…LFNQLTAEHK (91 aa)). Cys377 serves as the catalytic Phosphocysteine intermediate; for EIIB activity. Phosphocysteine; by EIIA is present on Cys377.

The protein resides in the cell inner membrane. The enzyme catalyses D-mannitol(out) + N(pros)-phospho-L-histidyl-[protein] = D-mannitol 1-phosphate(in) + L-histidyl-[protein]. Functionally, the phosphoenolpyruvate-dependent sugar phosphotransferase system (sugar PTS), a major carbohydrate active transport system, catalyzes the phosphorylation of incoming sugar substrates concomitantly with their translocation across the cell membrane. The enzyme II CmtAB PTS system is involved in D-mannitol transport. In Escherichia coli O157:H7, this protein is PTS system mannitol-specific cryptic EIICB component (cmtA).